Here is a 962-residue protein sequence, read N- to C-terminus: AP2-associated protein kinase 1 (962 aa).

N-acetylmethionine is present on Met1. Residues 1 to 11 show a composition bias toward basic and acidic residues; the sequence is MKKFFDSRREQ. The tract at residues 1 to 27 is disordered; sequence MKKFFDSRREQGSSGLGSGSSGGGGSS. Phosphoserine is present on Ser14. The span at 14–27 shows a compositional bias: gly residues; it reads SGLGSGSSGGGGSS. Positions 46 to 314 constitute a Protein kinase domain; that stretch reads VTVDEVLAEG…QVSYFSFKLL (269 aa). ATP contacts are provided by residues 52-60 and Lys74; that span reads LAEGGFALV. The active-site Proton acceptor is the Asp176. The residue at position 234 (Tyr234) is a Phosphotyrosine. The residue at position 235 (Ser235) is a Phosphoserine. Disordered regions lie at residues 325-515 and 576-633; these read NSPI…QFQA and PQAQ…RAGH. Thr353 and Thr388 each carry phosphothreonine. Arg390 bears the Omega-N-methylarginine mark. Over residues 397–418 the composition is skewed to polar residues; sequence PLPQATGPSNQPSLLASVSQPK. The segment covering 419 to 434 has biased composition (low complexity); that stretch reads AQATPSQPLQSSQPKQ. The span at 435 to 444 shows a compositional bias: pro residues; sequence PQAPPTPQQT. Thr440 bears the Phosphothreonine mark. Low complexity-rich tracts occupy residues 445–485, 498–514, and 576–606; these read PAPQ…QPQQ, QQQQ…QQFQ, and PQAQ…KVQT. Phosphothreonine is present on Thr607. Polar residues predominate over residues 614 to 628; it reads GQKVGSLTPPSSPKT. Ser619 carries the post-translational modification Phosphoserine. The residue at position 621 (Thr621) is a Phosphothreonine. A phosphoserine mark is found at Ser624, Ser625, Ser638, and Ser651. Thr654 is subject to Phosphothreonine. Low complexity predominate over residues 664 to 677; that stretch reads ASLSKSKSATTTPS. Residues 664–702 are disordered; the sequence is ASLSKSKSATTTPSGSPRTSQQNVSNASEGSTWNPFDDD. Over residues 678-697 the composition is skewed to polar residues; the sequence is GSPRTSQQNVSNASEGSTWN. Residues Ser732, Ser847, Ser938, and Ser939 each carry the phosphoserine modification. The clathrin-binding domain (CBD) stretch occupies residues 824-961; it reads EKADAAVESL…SLLLVDQLID (138 aa). 2 disordered regions span residues 839-860 and 925-946; these read PPVA…TDSL and LITK…ESSL. The span at 846 to 860 shows a compositional bias: polar residues; sequence PSHTESVTSNRTDSL. Low complexity predominate over residues 932–945; it reads GGHSRNSSGSSESS.

Belongs to the protein kinase superfamily. Ser/Thr protein kinase family. Interacts (via CBD domain) with clathrin. Interacts with AP-2 complex. Interacts with NUMB. Interacts with alpha-adaptin. Interacts with EPS15. Interacts with membrane-bound activated NOTCH1 but not with the inactive full-length form of NOTCH1. Preferentially interacts with monoubiquitinated activated NOTCH1 compared to the non-ubiquitinated form. Autophosphorylated.

It is found in the cell membrane. The protein localises to the membrane. Its subcellular location is the clathrin-coated pit. The protein resides in the presynapse. The enzyme catalyses L-seryl-[protein] + ATP = O-phospho-L-seryl-[protein] + ADP + H(+). It carries out the reaction L-threonyl-[protein] + ATP = O-phospho-L-threonyl-[protein] + ADP + H(+). With respect to regulation, stimulated by clathrin. In terms of biological role, regulates clathrin-mediated endocytosis by phosphorylating the AP2M1/mu2 subunit of the adaptor protein complex 2 (AP-2) which ensures high affinity binding of AP-2 to cargo membrane proteins during the initial stages of endocytosis. Preferentially, may phosphorylate substrates on threonine residues. Regulates phosphorylation of other AP-2 subunits as well as AP-2 localization and AP-2-mediated internalization of ligand complexes. Phosphorylates NUMB and regulates its cellular localization, promoting NUMB localization to endosomes. Binds to and stabilizes the activated form of NOTCH1, increases its localization in endosomes and regulates its transcriptional activity. This is AP2-associated protein kinase 1 (Aak1) from Rattus norvegicus (Rat).